A 233-amino-acid polypeptide reads, in one-letter code: Small ribosomal subunit protein uS2c (233 aa).

This sequence belongs to the universal ribosomal protein uS2 family.

Its subcellular location is the plastid. It is found in the chloroplast. This is Small ribosomal subunit protein uS2c (rps2) from Galdieria sulphuraria (Red alga).